Here is a 342-residue protein sequence, read N- to C-terminus: Pyrophosphate--fructose 6-phosphate 1-phosphotransferase (342 aa).

Gly-10 is a binding site for diphosphate. Glu-103 lines the Mg(2+) pocket. Substrate contacts are provided by residues 126–128 (TID), Arg-163, 170–172 (MGR), Glu-222, Arg-266, and 272–275 (HVQR). Catalysis depends on Asp-128, which acts as the Proton acceptor.

This sequence belongs to the phosphofructokinase type A (PFKA) family. Mixed-substrate PFK group III subfamily. Homodimer or homotetramer. Requires Mg(2+) as cofactor.

It localises to the cytoplasm. It carries out the reaction beta-D-fructose 6-phosphate + diphosphate = beta-D-fructose 1,6-bisphosphate + phosphate + H(+). It functions in the pathway carbohydrate degradation; glycolysis; D-glyceraldehyde 3-phosphate and glycerone phosphate from D-glucose: step 3/4. Its activity is regulated as follows. Non-allosteric. In terms of biological role, catalyzes the phosphorylation of D-fructose 6-phosphate, the first committing step of glycolysis. Uses inorganic phosphate (PPi) as phosphoryl donor instead of ATP like common ATP-dependent phosphofructokinases (ATP-PFKs), which renders the reaction reversible, and can thus function both in glycolysis and gluconeogenesis. Consistently, PPi-PFK can replace the enzymes of both the forward (ATP-PFK) and reverse (fructose-bisphosphatase (FBPase)) reactions. The chain is Pyrophosphate--fructose 6-phosphate 1-phosphotransferase from Streptomyces coelicolor (strain ATCC BAA-471 / A3(2) / M145).